Reading from the N-terminus, the 75-residue chain is Sperm-specific protein PL-I (75 aa).

The H15 domain occupies 2 to 74; the sequence is GSSGMMSMVA…GSAGWVLVPK (73 aa).

The protein belongs to the histone H1/H5 family. In terms of tissue distribution, sperm.

It localises to the nucleus. The protein resides in the chromosome. Functionally, linker histones are implicated in chromatin remodeling and/or transcriptional regulation during spermiogenesis, the process of spermatid maturation into spermatozoa. The protein is Sperm-specific protein PL-I of Spisula solidissima (Atlantic surf-clam).